Consider the following 151-residue polypeptide: Ribosome maturation factor RimP (151 aa).

Belongs to the RimP family.

It is found in the cytoplasm. In terms of biological role, required for maturation of 30S ribosomal subunits. In Saccharophagus degradans (strain 2-40 / ATCC 43961 / DSM 17024), this protein is Ribosome maturation factor RimP.